The following is a 149-amino-acid chain: Transcription factor MafF (149 aa).

The interval 51-76 (RLKQRRRTLKNRGYAASCRVKRVCQK) is basic motif. The bZIP domain occupies 51-114 (RLKQRRRTLK…DTLRGKYEAL (64 aa)). The tract at residues 79 to 93 (LQKQKMELEWEVDKL) is leucine-zipper.

This sequence belongs to the bZIP family. Maf subfamily. In terms of assembly, monomer and homo- or heterodimer. Highly expressed in the ovary, lower expression in the brain, heart and mesenterium.

It is found in the nucleus. Since it lacks a putative transactivation domain, it may behave as a transcriptional repressor when it dimerizes among itself. May also serve as a transcriptional activator by dimerizing with other (usually larger) basic-zipper proteins and recruiting them to specific DNA-binding sites. May be involved in the cellular stress response. This Gallus gallus (Chicken) protein is Transcription factor MafF (MAFF).